Reading from the N-terminus, the 756-residue chain is Photosystem I P700 chlorophyll a apoprotein A1 (756 aa).

8 helical membrane-spanning segments follow: residues 73–96 (IFSA…FHGA), 159–182 (LYVT…FHYH), 198–222 (MNHH…HVSL), 298–316 (TAHH…GHMY), 353–376 (WHAQ…HHMY), 392–418 (LSLF…IYMV), 440–462 (AIIS…LYIH), and 537–555 (FLVH…LILL). The [4Fe-4S] cluster site is built by Cys579 and Cys588. The next 2 membrane-spanning stretches (helical) occupy residues 595–616 (HVFL…HFSW) and 670–692 (LSAY…MFLF). His681 is a chlorophyll a' binding site. Met689 and Tyr697 together coordinate chlorophyll a. Trp698 is a binding site for phylloquinone. The helical transmembrane segment at 730 to 750 (AVGVAHYLLGGIATTWAFFLA) threads the bilayer.

Belongs to the PsaA/PsaB family. In terms of assembly, the PsaA/B heterodimer binds the P700 chlorophyll special pair and subsequent electron acceptors. PSI consists of a core antenna complex that captures photons, and an electron transfer chain that converts photonic excitation into a charge separation. The cyanobacterial PSI reaction center is composed of one copy each of PsaA,B,C,D,E,F,I,J,K,L,M and X, and forms trimeric complexes. The cofactor is PSI electron transfer chain: 5 chlorophyll a, 1 chlorophyll a', 2 phylloquinones and 3 4Fe-4S clusters. PSI core antenna: 90 chlorophyll a, 22 carotenoids, 3 phospholipids and 1 galactolipid. P700 is a chlorophyll a/chlorophyll a' dimer, A0 is one or more chlorophyll a, A1 is one or both phylloquinones and FX is a shared 4Fe-4S iron-sulfur center..

It localises to the cellular thylakoid membrane. The enzyme catalyses reduced [plastocyanin] + hnu + oxidized [2Fe-2S]-[ferredoxin] = oxidized [plastocyanin] + reduced [2Fe-2S]-[ferredoxin]. Its function is as follows. PsaA and PsaB bind P700, the primary electron donor of photosystem I (PSI), as well as the electron acceptors A0, A1 and FX. PSI is a plastocyanin/cytochrome c6-ferredoxin oxidoreductase, converting photonic excitation into a charge separation, which transfers an electron from the donor P700 chlorophyll pair to the spectroscopically characterized acceptors A0, A1, FX, FA and FB in turn. Oxidized P700 is reduced on the lumenal side of the thylakoid membrane by plastocyanin or cytochrome c6. The polypeptide is Photosystem I P700 chlorophyll a apoprotein A1 (Cyanothece sp. (strain PCC 7425 / ATCC 29141)).